A 785-amino-acid chain; its full sequence is Disintegrin and metalloproteinase domain-containing protein B (785 aa).

A signal peptide spans 1–26 (MRFLKSALPFVASALSLLSVQAAARS). Topologically, residues 27-703 (QEPSAIQHVS…GSWVEQHKNL (677 aa)) are extracellular. The 229-residue stretch at 279–507 (KQVALVGIAA…NSVKSSCLSD (229 aa)) folds into the Peptidase M12B domain. Residues Asn-322, Asn-329, and Asn-355 are each glycosylated (N-linked (GlcNAc...) asparagine). 2 disulfides stabilise this stretch: Cys-398–Cys-492 and Cys-446–Cys-464. His-429 serves as a coordination point for Zn(2+). Residue Glu-430 is part of the active site. 2 residues coordinate Zn(2+): His-433 and His-439. One can recognise a Disintegrin domain in the interval 516–605 (GSQCGNGIVE…TCPADSFKKD (90 aa)). Asn-561, Asn-593, and Asn-640 each carry an N-linked (GlcNAc...) asparagine glycan. A disulfide bridge links Cys-577 with Cys-597. The helical transmembrane segment at 704 to 724 (VIGVACGVGGLLVLSILWCMI) threads the bilayer. The Cytoplasmic portion of the chain corresponds to 725 to 785 (NRCRRARTVV…GPYQSATRYA (61 aa)). A disordered region spans residues 737–785 (PPMRPWPGPMPPPPPQMGQWAGPNRGYQGLRAEPPPPYPGPYQSATRYA). Residues 739–752 (MRPWPGPMPPPPPQ) show a composition bias toward pro residues.

Requires Zn(2+) as cofactor.

The protein localises to the membrane. In terms of biological role, probable zinc protease. The chain is Disintegrin and metalloproteinase domain-containing protein B (ADM-B) from Aspergillus fumigatus (strain ATCC MYA-4609 / CBS 101355 / FGSC A1100 / Af293) (Neosartorya fumigata).